The following is a 173-amino-acid chain: Lipid A deacylase PagL (173 aa).

An N-terminal signal peptide occupies residues 1-23; the sequence is MKKLLPLAVLAALSSVHVASAQA. The Periplasmic portion of the chain corresponds to 25–28; sequence DVSA. A beta stranded transmembrane segment spans residues 29 to 32; that stretch reads AVGA. A topological domain (periplasmic) is located at residue T33. Residues 34-49 form a beta stranded membrane-spanning segment; sequence GQSGMTYRLGLSWDWD. The Extracellular segment spans residues 50-56; that stretch reads KSWWQTS. Residues 57–71 traverse the membrane as a beta stranded segment; that stretch reads TGRLTGYWDAGYTYW. At 72–73 the chain is on the periplasmic side; it reads EG. A beta stranded transmembrane segment spans residues 74–89; it reads GDEGAGKHSLSFAPVF. Position 90 (V90) is a topological domain, extracellular. The beta stranded transmembrane segment at 91 to 93 threads the bilayer; that stretch reads YEF. Over 94–95 the chain is Periplasmic; that stretch reads AG. A beta stranded membrane pass occupies residues 96–98; that stretch reads DSI. Residues 99–100 lie on the Extracellular side of the membrane; the sequence is KP. The chain crosses the membrane as a beta stranded span at residues 101–115; it reads FIEAGIGVAAFSGTR. Over 116 to 117 the chain is Periplasmic; sequence VG. A beta stranded transmembrane segment spans residues 118 to 128; the sequence is DQNLGSSLNFE. Over 129–138 the chain is Extracellular; the sequence is DRIGAGLKFA. A beta stranded transmembrane segment spans residues 139–148; that stretch reads NGQSVGVRAI. Active-site charge relay system residues include H149, S151, and E163. Residues 149 to 173 are Periplasmic-facing; the sequence is HYSNAGLKQPNDGIESYSLFYKIPI.

Belongs to the PagL family. As to quaternary structure, homodimer.

The protein localises to the cell outer membrane. It carries out the reaction a 3-(acyloxy)acyl derivative of bacterial toxin + H2O = a 3-hydroxyacyl derivative of bacterial toxin + a fatty acid + H(+). Its activity is regulated as follows. Decreased activity at low temperatures (15 or 21 degrees Celsius). Has lipid A 3-O-deacylase activity. Hydrolyzes the ester bond at the 3 position of lipid A, a bioactive component of lipopolysaccharide (LPS), thereby releasing the primary fatty acyl moiety. Lacks fatty acyl chain-length specificity as removes both 3-OH C10 and 3-OH C14 fatty acids from lipid A. The chain is Lipid A deacylase PagL from Pseudomonas aeruginosa (strain ATCC 15692 / DSM 22644 / CIP 104116 / JCM 14847 / LMG 12228 / 1C / PRS 101 / PAO1).